The chain runs to 87 residues: U15-lycotoxin-Ls1f (87 aa).

Positions 1–20 (MNSKIFAVLLLLAFLSCVLS) are cleaved as a signal peptide. Residues 21–66 (DQYCPKSSITACKKMNIRNDCCKDDDCTGGSWCCATPCGNFCKYPT) form the WAP domain. Disulfide bonds link Cys-24/Cys-54, Cys-32/Cys-58, Cys-41/Cys-53, Cys-42/Cys-80, and Cys-47/Cys-62.

It belongs to the venom protein 11 family. 01 (wap-1) subfamily. Post-translationally, contains 5 disulfide bonds. In terms of tissue distribution, expressed by the venom gland.

The protein localises to the secreted. Has antibacterial activity. In Lycosa singoriensis (Wolf spider), this protein is U15-lycotoxin-Ls1f.